A 424-amino-acid polypeptide reads, in one-letter code: MFS-type transporter opdF (424 aa).

The span at 1–10 shows a compositional bias: basic and acidic residues; it reads MSDTSLEKGN. Residues 1-23 are disordered; it reads MSDTSLEKGNEGPTAEAPKVAPP. 5 helical membrane passes run 36 to 56, 102 to 122, 127 to 147, 160 to 180, and 187 to 207; these read VAGASVALFVSFGWVNCIALF, VPIAIGSFLHVFGLMMASLST, LMLSQSVVSGIGSSLIFTPAM, IVGGLTVAGSSLGGVVFPLMV, and VGFGWTMRICAFMILGLLVFA. A glycan (N-linked (GlcNAc...) asparagine) is linked at Asn-208. A run of 6 helical transmembrane segments spans residues 239 to 259, 265 to 285, 299 to 319, 329 to 349, 364 to 384, and 391 to 411; these read LCVASFFMYWGIFIPFDYIVV, GMSTQMAWSLVPILNGASFFG, FNVMIVMTTLSAILVLALWLP, FAALFGITSGAIIGLGPVLIV, VLAFAAVGTLTSPPIGGAIAA, and TYTCVFSGVSFLIGTLGLAAL.

It belongs to the major facilitator superfamily. Monocarboxylate porter (TC 2.A.1.13) family.

The protein localises to the membrane. MFS-type transporter; part of the gene cluster that mediates the biosynthesis of oxopyrrolidines, polyketide-amino acid hybrid compounds with feature structures of tetramic acid. The protein is MFS-type transporter opdF of Penicillium oxalicum (strain 114-2 / CGMCC 5302) (Penicillium decumbens).